A 391-amino-acid chain; its full sequence is Chorismate synthase (391 aa).

2 residues coordinate NADP(+): R39 and R45. FMN contacts are provided by residues R133–S135, Q254–A255, G299, K314–T318, and R340.

Belongs to the chorismate synthase family. In terms of assembly, homotetramer. The cofactor is FMNH2.

It catalyses the reaction 5-O-(1-carboxyvinyl)-3-phosphoshikimate = chorismate + phosphate. Its pathway is metabolic intermediate biosynthesis; chorismate biosynthesis; chorismate from D-erythrose 4-phosphate and phosphoenolpyruvate: step 7/7. Functionally, catalyzes the anti-1,4-elimination of the C-3 phosphate and the C-6 proR hydrogen from 5-enolpyruvylshikimate-3-phosphate (EPSP) to yield chorismate, which is the branch point compound that serves as the starting substrate for the three terminal pathways of aromatic amino acid biosynthesis. This reaction introduces a second double bond into the aromatic ring system. This is Chorismate synthase from Symbiobacterium thermophilum (strain DSM 24528 / JCM 14929 / IAM 14863 / T).